A 41-amino-acid polypeptide reads, in one-letter code: Virescein (41 aa).

A Histidine amide modification is found at histidine 41.

Monomer. In terms of tissue distribution, hemolymph.

It is found in the secreted. Functionally, has antibacterial activity against Gram-positive and Gram-negative bacteria. This chain is Virescein, found in Heliothis virescens (Tobacco budworm moth).